Reading from the N-terminus, the 192-residue chain is Leucine-rich repeat-containing protein 51 (192 aa).

LRR repeat units follow at residues 49–71, 80–101, and 103–124; these read SLTQ…NQVA, NLAW…LTTF, and NLSV…NKLA. Residues 137–175 form the LRRCT domain; it reads NPMEEEKGYRQYVLCTLSRITTFDFAGVTKADRTTAEVW.

The protein localises to the cytoplasm. This Pan troglodytes (Chimpanzee) protein is Leucine-rich repeat-containing protein 51.